A 96-amino-acid polypeptide reads, in one-letter code: Putative septation protein SpoVG (96 aa).

The protein belongs to the SpoVG family.

Its function is as follows. Could be involved in septation. The chain is Putative septation protein SpoVG from Borrelia hermsii (strain HS1 / DAH).